The following is a 188-amino-acid chain: Elongation factor P (188 aa).

It belongs to the elongation factor P family.

The protein resides in the cytoplasm. The protein operates within protein biosynthesis; polypeptide chain elongation. In terms of biological role, involved in peptide bond synthesis. Stimulates efficient translation and peptide-bond synthesis on native or reconstituted 70S ribosomes in vitro. Probably functions indirectly by altering the affinity of the ribosome for aminoacyl-tRNA, thus increasing their reactivity as acceptors for peptidyl transferase. In Methylobacterium radiotolerans (strain ATCC 27329 / DSM 1819 / JCM 2831 / NBRC 15690 / NCIMB 10815 / 0-1), this protein is Elongation factor P.